A 127-amino-acid chain; its full sequence is MFRTMMRAKLHRATVTEANLNYVGSITIDEDLMDAVNIVENEKVQIVNNNNGARLETYVIKGERGSGVVCLNGAAARLVQPGDKVIIICYGLVAEENIHKQEPKIAVLDDNNQIIEMLGAEKAGTIL.

Residue S25 is the Schiff-base intermediate with substrate; via pyruvic acid of the active site. The residue at position 25 (S25) is a Pyruvic acid (Ser). T57 is a binding site for substrate. The active-site Proton donor is the Y58. Substrate is bound at residue 73–75 (GAA).

Belongs to the PanD family. As to quaternary structure, heterooctamer of four alpha and four beta subunits. Pyruvate serves as cofactor. Is synthesized initially as an inactive proenzyme, which is activated by self-cleavage at a specific serine bond to produce a beta-subunit with a hydroxyl group at its C-terminus and an alpha-subunit with a pyruvoyl group at its N-terminus.

The protein resides in the cytoplasm. It catalyses the reaction L-aspartate + H(+) = beta-alanine + CO2. It participates in cofactor biosynthesis; (R)-pantothenate biosynthesis; beta-alanine from L-aspartate: step 1/1. Functionally, catalyzes the pyruvoyl-dependent decarboxylation of aspartate to produce beta-alanine. This is Aspartate 1-decarboxylase from Bacillus cereus (strain ATCC 10987 / NRS 248).